Reading from the N-terminus, the 126-residue chain is Histone H2B type 1-H (126 aa).

The segment covering 1 to 12 has biased composition (low complexity); it reads MPEPAKSAPAPK. Positions 1 to 36 are disordered; sequence MPEPAKSAPAPKKGSKKALTKAQKKDGKKRKRSRKE. P2 bears the N-acetylproline mark. Residue E3 is modified to ADP-ribosyl glutamic acid. An N6-(2-hydroxyisobutyryl)lysine; alternate modification is found at K6. Residue K6 is modified to N6-(beta-hydroxybutyryl)lysine; alternate. Position 6 is an N6-acetyllysine; alternate (K6). Position 6 is an N6-butyryllysine; alternate (K6). An N6-crotonyllysine; alternate modification is found at K6. K6 carries the post-translational modification N6-lactoyllysine; alternate. A Glycyl lysine isopeptide (Lys-Gly) (interchain with G-Cter in SUMO2); alternate cross-link involves residue K6. An ADP-ribosylserine modification is found at S7. Position 12 is an N6-(beta-hydroxybutyryl)lysine; alternate (K12). 2 positions are modified to N6-acetyllysine; alternate: K12 and K13. 2 positions are modified to N6-crotonyllysine; alternate: K12 and K13. K12 is subject to N6-lactoyllysine; alternate. N6-(2-hydroxyisobutyryl)lysine; alternate is present on K13. S15 carries the phosphoserine; by STK4/MST1 modification. K16, K17, K21, and K24 each carry N6-acetyllysine; alternate. 4 positions are modified to N6-crotonyllysine; alternate: K16, K17, K21, and K24. Residues K16, K17, K21, and K24 each carry the N6-lactoyllysine; alternate modification. The residue at position 17 (K17) is an N6-glutaryllysine; alternate. N6-(2-hydroxyisobutyryl)lysine; alternate occurs at positions 21 and 24. N6-(beta-hydroxybutyryl)lysine; alternate is present on K21. At K21 the chain carries N6-butyryllysine; alternate. A Glycyl lysine isopeptide (Lys-Gly) (interchain with G-Cter in SUMO2); alternate cross-link involves residue K21. K25 carries the N6-(2-hydroxyisobutyryl)lysine modification. K35 bears the N6-(2-hydroxyisobutyryl)lysine; alternate mark. K35 is modified (N6-(beta-hydroxybutyryl)lysine; alternate). N6-crotonyllysine; alternate is present on K35. K35 carries the N6-glutaryllysine; alternate modification. K35 is modified (N6-succinyllysine; alternate). A Glycyl lysine isopeptide (Lys-Gly) (interchain with G-Cter in ubiquitin); alternate cross-link involves residue K35. E36 is modified (polyADP-ribosyl glutamic acid). S37 is modified (phosphoserine; by AMPK). K44, K47, and K58 each carry N6-(2-hydroxyisobutyryl)lysine; alternate. At K44 the chain carries N6-lactoyllysine; alternate. Residues K44 and K47 each carry the N6-glutaryllysine; alternate modification. K47 bears the N6-methyllysine; alternate mark. N6,N6-dimethyllysine; alternate is present on K58. A Dimethylated arginine modification is found at R80. N6-(2-hydroxyisobutyryl)lysine; alternate is present on K86. K86 carries the post-translational modification N6-acetyllysine; alternate. The residue at position 86 (K86) is an N6-lactoyllysine; alternate. The residue at position 86 (K86) is an N6,N6,N6-trimethyllysine; alternate. R87 and R93 each carry omega-N-methylarginine. K109 carries the post-translational modification N6-(2-hydroxyisobutyryl)lysine; alternate. K109 is subject to N6-(beta-hydroxybutyryl)lysine; alternate. K109 bears the N6-lactoyllysine; alternate mark. Position 109 is an N6-glutaryllysine; alternate (K109). Position 109 is an N6-methyllysine; alternate (K109). Residue S113 is glycosylated (O-linked (GlcNAc) serine). T116 is modified (phosphothreonine). N6-(2-hydroxyisobutyryl)lysine; alternate is present on residues K117 and K121. Residue K117 is modified to N6-(beta-hydroxybutyryl)lysine; alternate. N6-lactoyllysine; alternate occurs at positions 117 and 121. An N6-glutaryllysine; alternate mark is found at K117 and K121. N6-succinyllysine; alternate occurs at positions 117 and 121. Residue K117 is modified to N6-methylated lysine; alternate. A Glycyl lysine isopeptide (Lys-Gly) (interchain with G-Cter in ubiquitin); alternate cross-link involves residue K121.

Belongs to the histone H2B family. The nucleosome is a histone octamer containing two molecules each of H2A, H2B, H3 and H4 assembled in one H3-H4 heterotetramer and two H2A-H2B heterodimers. The octamer wraps approximately 147 bp of DNA. Post-translationally, monoubiquitination at Lys-35 (H2BK34Ub) by the MSL1/MSL2 dimer is required for histone H3 'Lys-4' (H3K4me) and 'Lys-79' (H3K79me) methylation and transcription activation at specific gene loci, such as HOXA9 and MEIS1 loci. Similarly, monoubiquitination at Lys-121 (H2BK120Ub) by the RNF20/40 complex gives a specific tag for epigenetic transcriptional activation and is also prerequisite for histone H3 'Lys-4' and 'Lys-79' methylation. It also functions cooperatively with the FACT dimer to stimulate elongation by RNA polymerase II. H2BK120Ub also acts as a regulator of mRNA splicing: deubiquitination by USP49 is required for efficient cotranscriptional splicing of a large set of exons. Phosphorylated on Ser-15 (H2BS14ph) by STK4/MST1 during apoptosis; which facilitates apoptotic chromatin condensation. Also phosphorylated on Ser-15 in response to DNA double strand breaks (DSBs), and in correlation with somatic hypermutation and immunoglobulin class-switch recombination. Phosphorylation at Ser-37 (H2BS36ph) by AMPK in response to stress promotes transcription. In terms of processing, glcNAcylation at Ser-113 promotes monoubiquitination of Lys-121. It fluctuates in response to extracellular glucose, and associates with transcribed genes. Post-translationally, ADP-ribosylated by PARP1 or PARP2 on Ser-7 (H2BS6ADPr) in response to DNA damage. H2BS6ADPr promotes recruitment of CHD1L. Mono-ADP-ribosylated on Glu-3 (H2BE2ADPr) by PARP3 in response to single-strand breaks. Poly ADP-ribosylation on Glu-36 (H2BE35ADPr) by PARP1 regulates adipogenesis: it inhibits phosphorylation at Ser-37 (H2BS36ph), thereby blocking expression of pro-adipogenetic genes. Crotonylation (Kcr) is specifically present in male germ cells and marks testis-specific genes in post-meiotic cells, including X-linked genes that escape sex chromosome inactivation in haploid cells. Crotonylation marks active promoters and enhancers and confers resistance to transcriptional repressors. It is also associated with post-meiotically activated genes on autosomes. In terms of processing, hydroxybutyrylation of histones is induced by starvation. Post-translationally, lactylated in macrophages by EP300/P300 by using lactoyl-CoA directly derived from endogenous or exogenous lactate, leading to stimulates gene transcription.

The protein localises to the nucleus. Its subcellular location is the chromosome. Core component of nucleosome. Nucleosomes wrap and compact DNA into chromatin, limiting DNA accessibility to the cellular machineries which require DNA as a template. Histones thereby play a central role in transcription regulation, DNA repair, DNA replication and chromosomal stability. DNA accessibility is regulated via a complex set of post-translational modifications of histones, also called histone code, and nucleosome remodeling. The chain is Histone H2B type 1-H from Mus musculus (Mouse).